A 163-amino-acid chain; its full sequence is Mating-type protein ALPHA2 (163 aa).

The segment at residues 80 to 142 (IEKRSKRFPK…NRRRKERTLT (63 aa)) is a DNA-binding region (homeobox; TALE-type).

The protein belongs to the TALE/M-ATYP homeobox family.

It is found in the nucleus. In terms of biological role, mating type proteins are sequence specific DNA-binding proteins that act as master switches in yeast differentiation by controlling gene expression in a cell type-specific fashion. In Pichia angusta (Yeast), this protein is Mating-type protein ALPHA2 (MATALPHA2).